The primary structure comprises 227 residues: Translation initiation factor 6 (227 aa).

This sequence belongs to the eIF-6 family.

Its function is as follows. Binds to the 50S ribosomal subunit and prevents its association with the 30S ribosomal subunit to form the 70S initiation complex. The sequence is that of Translation initiation factor 6 from Methanococcus maripaludis (strain C6 / ATCC BAA-1332).